The sequence spans 317 residues: Probable methyltransferase tdiE (317 aa).

This sequence belongs to the methyltransferase superfamily. LaeA methyltransferase family.

The protein operates within secondary metabolite biosynthesis. Probable methyltransferase; part of the gene cluster that mediates the biosynthesis of terrequinone A, an antitumor agent. The first step in the biosynthetic pathway for terrequinone A is formation of indole pyruvic acid (IPA) from L-tryptophan by the aminotransferase tdiD. The nonribosomal peptide synthase tdiA then immediately converts unstable IPA to didemethylasterriquinone D (DDAQ D), via condensation of 2 IPA molecules. The symmetric connectivity of the 2 IPA molecules is thought to arise by head-to-tail dual Claisen condensations facilitated by the TE domain. TdiB then catalyzes reverse prenylation by transferring dimethylallyl diphosphate to carbon atom 2' of DDAQ D, to yield asterriquinone C-1. Finally, tdiC and tdiE enzymes robustly convert asterriquinone C-1 to terrequinone A via a transformation involving regular prenylation at carbon atom 5, which requires elimination of the hydroxy group on C-5. The chain is Probable methyltransferase tdiE from Emericella nidulans (strain FGSC A4 / ATCC 38163 / CBS 112.46 / NRRL 194 / M139) (Aspergillus nidulans).